The primary structure comprises 399 residues: MSSDMEGGMITMKANDTTKYLIHAEIEAEGVVERPDVVGAIFGQTEGLLGGDLDLRELQKTGRIGRIEVKIESKGGRSFGEIKVPSSLDKVETAILAAALETIERVGPCSAKIKVLKIEDVRASKRKRIVERAMNILREHFEEPEIESERIVEIVRQAIRADEIVEYGEEKLPAGPAIDESDAIIVVEGRADVLNLLKHGIKNVIAVEGTNIPKTIVELSKKKTVTAFLDGDRGGDLILKELLQVAEVDYVARAPEGKEVEDLTQKEILKSLRNKVPVEQLHVLKKEAKEGREREKLAEMPKDSISDVLRKHTESVKGRLTARVLDRNLNVIKEVPVRDLVKILKTNNMKGSAIVFDGIITQRLIDLAAKKEFDYIVGVRLGSVVKVPTSLRVITFDQL.

A Toprim domain is found at 182–268 (DAIIVVEGRA…EVEDLTQKEI (87 aa)). Glu-188, Asp-230, and Asp-232 together coordinate Mg(2+).

Belongs to the archaeal DnaG primase family. As to quaternary structure, forms a ternary complex with MCM helicase and DNA. Component of the archaeal exosome complex. It depends on Mg(2+) as a cofactor.

It catalyses the reaction ssDNA + n NTP = ssDNA/pppN(pN)n-1 hybrid + (n-1) diphosphate.. Its function is as follows. RNA polymerase that catalyzes the synthesis of short RNA molecules used as primers for DNA polymerase during DNA replication. Also part of the exosome, which is a complex involved in RNA degradation. Acts as a poly(A)-binding protein that enhances the interaction between heteromeric, adenine-rich transcripts and the exosome. In Archaeoglobus fulgidus (strain ATCC 49558 / DSM 4304 / JCM 9628 / NBRC 100126 / VC-16), this protein is DNA primase DnaG.